The chain runs to 965 residues: Transmembrane channel-like protein 5 (965 aa).

Composition is skewed to polar residues over residues Met-1–Tyr-10 and Ser-20–Arg-31. The interval Met-1–Pro-235 is disordered. Residues Met-1–Lys-417 lie on the Extracellular side of the membrane. The segment covering Thr-61–Ala-70 has biased composition (basic and acidic residues). Over residues Gln-166–Pro-181 the composition is skewed to polar residues. Position 248 is a phosphoserine (Ser-248). A helical membrane pass occupies residues Phe-418–Gly-438. Topologically, residues Glu-439 to Gln-444 are cytoplasmic. A helical membrane pass occupies residues Phe-445–Tyr-467. At Thr-468–Gln-484 the chain is on the extracellular side. A helical transmembrane segment spans residues Leu-485 to Ser-505. Residues Met-506–His-578 lie on the Cytoplasmic side of the membrane. Residues Val-579–Leu-599 form a helical membrane-spanning segment. The Extracellular portion of the chain corresponds to Ala-600–Pro-613. The chain crosses the membrane as a helical span at residues Gly-614–Tyr-634. Residues Ser-635–Asn-657 lie on the Cytoplasmic side of the membrane. The chain crosses the membrane as a helical span at residues Ile-658–Leu-678. Topologically, residues Ser-679–Asp-691 are extracellular. A helical transmembrane segment spans residues Ile-692 to Phe-712. The Cytoplasmic portion of the chain corresponds to Leu-713–Trp-747. A helical transmembrane segment spans residues Leu-748–Phe-768. At Tyr-769 to Phe-794 the chain is on the extracellular side. A helical transmembrane segment spans residues Phe-795–Ile-815. The Cytoplasmic segment spans residues Trp-816–Asn-859. The chain crosses the membrane as a helical span at residues Leu-860–Leu-880. At Tyr-881–Ala-965 the chain is on the extracellular side.

Belongs to the TMC family.

It localises to the membrane. Its function is as follows. Probable component of an ion channel. Molecular function hasn't been characterized yet. This Rattus norvegicus (Rat) protein is Transmembrane channel-like protein 5.